The following is a 140-amino-acid chain: Nucleoside diphosphate kinase (140 aa).

ATP is bound by residues Lys11, Phe59, Arg87, Thr93, Arg104, and Asn114. His117 serves as the catalytic Pros-phosphohistidine intermediate.

The protein belongs to the NDK family. As to quaternary structure, homotetramer. The cofactor is Mg(2+).

It is found in the cytoplasm. It carries out the reaction a 2'-deoxyribonucleoside 5'-diphosphate + ATP = a 2'-deoxyribonucleoside 5'-triphosphate + ADP. The enzyme catalyses a ribonucleoside 5'-diphosphate + ATP = a ribonucleoside 5'-triphosphate + ADP. Its function is as follows. Major role in the synthesis of nucleoside triphosphates other than ATP. The ATP gamma phosphate is transferred to the NDP beta phosphate via a ping-pong mechanism, using a phosphorylated active-site intermediate. The sequence is that of Nucleoside diphosphate kinase from Rhodospirillum centenum (strain ATCC 51521 / SW).